A 226-amino-acid chain; its full sequence is ATP-dependent dethiobiotin synthetase BioD (226 aa).

13–18 (DVGKTL) lines the ATP pocket. Threonine 17 lines the Mg(2+) pocket. Lysine 38 is a catalytic residue. ATP is bound by residues aspartate 55, 117–120 (EGAG), 177–178 (NR), 206–208 (PFV), and glutamate 213. Residues aspartate 55 and glutamate 117 each contribute to the Mg(2+) site.

It belongs to the dethiobiotin synthetase family. In terms of assembly, homodimer. The cofactor is Mg(2+).

Its subcellular location is the cytoplasm. It carries out the reaction (7R,8S)-7,8-diammoniononanoate + CO2 + ATP = (4R,5S)-dethiobiotin + ADP + phosphate + 3 H(+). It functions in the pathway cofactor biosynthesis; biotin biosynthesis; biotin from 7,8-diaminononanoate: step 1/2. Functionally, catalyzes a mechanistically unusual reaction, the ATP-dependent insertion of CO2 between the N7 and N8 nitrogen atoms of 7,8-diaminopelargonic acid (DAPA, also called 7,8-diammoniononanoate) to form a ureido ring. The polypeptide is ATP-dependent dethiobiotin synthetase BioD (Aeromonas hydrophila subsp. hydrophila (strain ATCC 7966 / DSM 30187 / BCRC 13018 / CCUG 14551 / JCM 1027 / KCTC 2358 / NCIMB 9240 / NCTC 8049)).